The primary structure comprises 1009 residues: MESFEGQGDSRQSPDNERGDNVQTTGEHDQDPGPGPPSSGASERLVPEESYSRDQQPWGQSRGDENRGWMQRIRRRRRRRAALSGHLLDTEDNVPPWLPPHDIAPYVARNIRDAACRAVKQSHLQALSNLILDSGLDTQHILCFVMAARQRLQDIRRGPLVVEGGVGWRHWLLTSPSQSWPMGYRTATLRTLTPVPNRVGADSIMLTATFGCQNAARTLNTFSATVWTPPHAGPREQERYAREAEVRFLRGKWQRRYRRIYDLIELCGSLHHIWQNLLQTEENLLDFVRFMGVMSSCNNPAVNYWFHKTIGNFKPYYPWNAPPNENPYHARRGIKEHVIQNAFRKAQIQGLSMLATVGEPRGDATSETSSDEDTGRQGSDVELESSDDELPYIDPNMEPVQQRPVMFVSRVPAKKPRKLPWPTPKTHPVKRTNVKTSDRSDKAEAQSTPERPGPSEQSSVTVEPAHPTPVEMPMVILHQPPPVPKPVPVKPTPPPSRRRRGACVVYDDDVIEVIDVETTEDSSSVSQPNKPHRKHQDGFQRSGRRQKRAAPPTVSPSDTGPPAAGPPAAGPPAAGPHILTPPSARPRIMAPPVVRMFMRERQLPQSTGRKPQCFWEMRASREITQMQQEPSSHLQSATQPTMPRPSWVPSVCALSVMDAGKAQPIQSSHLSSMSPTQPISHEEQPRYEDPDAPLDLSLHPDVAAPPAPRAPYQGYQEQPAPQAPYQGYQEQPAPQAPYQGYQEQPAPQAPYQGYQEQPAPQAPYQGYQEQPPPQAPYQGYQEQPAPQAPYQGYQEPPAHGLQSSSYPGYAGPWTPRSQHPCYRHPWAPWSQDPVHGHTQGPWDPRAPHLPPQWDGSAGHGQDQVSQFPHLQSETGPPRLQLSSVPLVSSSAPSWSSPQPRAPIRPIPTRFPPPPMPLQDSMAVGCDSSGTACPSMPFASDYSQGAFTPLDINATTPKRPRVEESSHGPARCSQATAEAQEILSDNSEISVFPKDAKQTDYDASTESELD.

Disordered regions lie at residues 1–70 (MESF…RGWM), 356–504 (TVGE…GACV), 516–646 (VETT…PRPS), 663–922 (QPIQ…DSMA), 948–971 (PLDI…PARC), and 984–1009 (DNSE…SELD). Over residues 12–31 (QSPDNERGDNVQTTGEHDQD) the composition is skewed to basic and acidic residues. Acidic residues predominate over residues 381–391 (VELESSDDELP). Residues 445–461 (AQSTPERPGPSEQSSVT) are compositionally biased toward polar residues. Composition is skewed to pro residues over residues 479–495 (QPPP…TPPP) and 563–574 (AAGPPAAGPPAA). Composition is skewed to polar residues over residues 622-641 (EITQ…TQPT) and 664-679 (PIQS…TQPI). Over residues 680–689 (SHEEQPRYED) the composition is skewed to basic and acidic residues. Low complexity-rich tracts occupy residues 710-769 (APYQ…GYQE) and 776-798 (PYQG…EPPA). Residues 862 to 874 (DQVSQFPHLQSET) show a composition bias toward polar residues. Residues 876–898 (PPRLQLSSVPLVSSSAPSWSSPQ) show a composition bias toward low complexity. The span at 899-916 (PRAPIRPIPTRFPPPPMP) shows a compositional bias: pro residues.

This sequence belongs to the herpesviridae EBNA-6 family. As to quaternary structure, interacts with host CTPB1; this interaction leads to gene repression, but also seems to interfere with the repressive function of CtBP pre-bound to DNA, leading to EBNA6 mediated up-regulation of many host genes. Interacts with host MYC; this interaction enhances MYC stability. Interacts (via N-terminus) with host RBPJ. Interacts (via N-terminus) with host histone H2AX; this interaction facilitates H2AX proteasomal degradation. Interacts with host TP73; this interaction inhibits TP73-mediated apoptotic pathway. Interacts (via N-terminus) with host PIM1; this interaction upregulates and stabilizes PIM1 and induces cell proliferation by inhibiting the growth suppressive properties of p21.

The protein resides in the host nucleus. It is found in the host nucleus matrix. Plays an essential role for the activation and immortalization of human B-cells. Represses transcription of viral promoters TP1 and Cp through interaction with host RBPJ, and inhibits EBNA2-mediated activation of these promoters. Targets host chromatin through interactions with host transcription factors, especially RBPJ and IRF4. Alternatively, EBNA6 also regulates the transcription of the EBV oncogene LMP1 in a cell cycle-dependent manner. Modulates the activity of several host proteins involved in cell cycle regulation including host cyclin A, MYC, RB, p21 and p27 mainly through binding to the host SCF(SKP2) complex. Inhibits the promoter of host H2AX and targets H2AX to proteasomal degradation in order to promote latency and cell proliferation. Upregulates host PIM1 expression and stabilization. Potentiates PIM1 to promote cell proliferation by inhibiting the growth suppressive properties of p21. This is Epstein-Barr nuclear antigen 6 (EBNA6) from Epstein-Barr virus (strain GD1) (HHV-4).